The following is a 324-amino-acid chain: ATP-dependent 6-phosphofructokinase (324 aa).

Glycine 15 contacts ATP. ADP is bound at residue 25–29; that stretch reads RGVVR. Residues 76 to 77 and 106 to 109 each bind ATP; these read RF and GDGS. Aspartate 107 is a Mg(2+) binding site. 130-132 contacts substrate; that stretch reads TID. Aspartate 132 functions as the Proton acceptor in the catalytic mechanism. Residue arginine 159 participates in ADP binding. Substrate-binding positions include arginine 167 and 174 to 176; that span reads MGR. Residues 190 to 192, lysine 216, and 218 to 220 contribute to the ADP site; these read GCE and KRH. Substrate contacts are provided by residues glutamate 227, arginine 248, and 254 to 257; that span reads HIQR.

It belongs to the phosphofructokinase type A (PFKA) family. ATP-dependent PFK group I subfamily. Prokaryotic clade 'B1' sub-subfamily. Homotetramer. Mg(2+) serves as cofactor.

It is found in the cytoplasm. It carries out the reaction beta-D-fructose 6-phosphate + ATP = beta-D-fructose 1,6-bisphosphate + ADP + H(+). The protein operates within carbohydrate degradation; glycolysis; D-glyceraldehyde 3-phosphate and glycerone phosphate from D-glucose: step 3/4. With respect to regulation, allosterically activated by ADP and other diphosphonucleosides, and allosterically inhibited by phosphoenolpyruvate. Catalyzes the phosphorylation of D-fructose 6-phosphate to fructose 1,6-bisphosphate by ATP, the first committing step of glycolysis. This Actinobacillus pleuropneumoniae serotype 5b (strain L20) protein is ATP-dependent 6-phosphofructokinase.